Reading from the N-terminus, the 293-residue chain is 1D-myo-inositol 2-acetamido-2-deoxy-alpha-D-glucopyranoside deacetylase (293 aa).

Zn(2+) is bound by residues His-16, Asp-19, and His-156.

It belongs to the MshB deacetylase family. Zn(2+) is required as a cofactor.

It catalyses the reaction 1D-myo-inositol 2-acetamido-2-deoxy-alpha-D-glucopyranoside + H2O = 1D-myo-inositol 2-amino-2-deoxy-alpha-D-glucopyranoside + acetate. Catalyzes the deacetylation of 1D-myo-inositol 2-acetamido-2-deoxy-alpha-D-glucopyranoside (GlcNAc-Ins) in the mycothiol biosynthesis pathway. The sequence is that of 1D-myo-inositol 2-acetamido-2-deoxy-alpha-D-glucopyranoside deacetylase from Nakamurella multipartita (strain ATCC 700099 / DSM 44233 / CIP 104796 / JCM 9543 / NBRC 105858 / Y-104) (Microsphaera multipartita).